The primary structure comprises 314 residues: MNVIKISPRGYCYGVVDAMVIAKNAALDKNLPRPIYILGMIVHNKHVTDAFEEDGIYTLDGPNRLDILKQVESGTVIFTAHGVSPEVRQIAEEKGLVAIDATCPDVTKTHELISEKTADGYDIIYIGKKGHPEPEGAVGVAPDKVHLVESEADIEALDLTSDKLLITNQTTMSQWDVHDLMELIKEKYPHVEYHQEICLATQVRQEAVSEQAGQADLTIVVGDPKSNNSNRLAQVSMEIAGTQAYRIGDLSELKLEWLQGVNTVAITAGASTPTPITKEVIRFLENYEPDDESTWKIERSVPLSKILPRVKTKK.

Cys-12 lines the [4Fe-4S] cluster pocket. (2E)-4-hydroxy-3-methylbut-2-enyl diphosphate-binding residues include His-43 and His-81. 2 residues coordinate dimethylallyl diphosphate: His-43 and His-81. Isopentenyl diphosphate contacts are provided by His-43 and His-81. Position 103 (Cys-103) interacts with [4Fe-4S] cluster. His-131 is a (2E)-4-hydroxy-3-methylbut-2-enyl diphosphate binding site. Residue His-131 coordinates dimethylallyl diphosphate. His-131 lines the isopentenyl diphosphate pocket. The active-site Proton donor is the Glu-133. Thr-170 lines the (2E)-4-hydroxy-3-methylbut-2-enyl diphosphate pocket. Cys-198 is a [4Fe-4S] cluster binding site. The (2E)-4-hydroxy-3-methylbut-2-enyl diphosphate site is built by Ser-226, Asn-228, and Ser-271. Ser-226, Asn-228, and Ser-271 together coordinate dimethylallyl diphosphate. Ser-226, Asn-228, and Ser-271 together coordinate isopentenyl diphosphate.

It belongs to the IspH family. [4Fe-4S] cluster is required as a cofactor.

It catalyses the reaction isopentenyl diphosphate + 2 oxidized [2Fe-2S]-[ferredoxin] + H2O = (2E)-4-hydroxy-3-methylbut-2-enyl diphosphate + 2 reduced [2Fe-2S]-[ferredoxin] + 2 H(+). It carries out the reaction dimethylallyl diphosphate + 2 oxidized [2Fe-2S]-[ferredoxin] + H2O = (2E)-4-hydroxy-3-methylbut-2-enyl diphosphate + 2 reduced [2Fe-2S]-[ferredoxin] + 2 H(+). It functions in the pathway isoprenoid biosynthesis; dimethylallyl diphosphate biosynthesis; dimethylallyl diphosphate from (2E)-4-hydroxy-3-methylbutenyl diphosphate: step 1/1. Its pathway is isoprenoid biosynthesis; isopentenyl diphosphate biosynthesis via DXP pathway; isopentenyl diphosphate from 1-deoxy-D-xylulose 5-phosphate: step 6/6. In terms of biological role, catalyzes the conversion of 1-hydroxy-2-methyl-2-(E)-butenyl 4-diphosphate (HMBPP) into a mixture of isopentenyl diphosphate (IPP) and dimethylallyl diphosphate (DMAPP). Acts in the terminal step of the DOXP/MEP pathway for isoprenoid precursor biosynthesis. The sequence is that of 4-hydroxy-3-methylbut-2-enyl diphosphate reductase from Bacillus pumilus (strain SAFR-032).